A 901-amino-acid chain; its full sequence is HTH-type transcriptional regulator MalT (901 aa).

39 to 46 (SPAGYGKT) contacts ATP. The region spanning 829 to 894 (ELIRTSPLTQ…DAVQHAQQLL (66 aa)) is the HTH luxR-type domain. Residues 853–872 (NEQIAGELAVAATTIKTHIR) constitute a DNA-binding region (H-T-H motif).

This sequence belongs to the MalT family. In terms of assembly, monomer in solution. Oligomerizes to an active state in the presence of the positive effectors ATP and maltotriose.

With respect to regulation, activated by ATP and maltotriose, which are both required for DNA binding. Its function is as follows. Positively regulates the transcription of the maltose regulon whose gene products are responsible for uptake and catabolism of malto-oligosaccharides. Specifically binds to the promoter region of its target genes, recognizing a short DNA motif called the MalT box. In Salmonella typhi, this protein is HTH-type transcriptional regulator MalT.